We begin with the raw amino-acid sequence, 147 residues long: MKTITIKVKRLHSKAMLPAYMSPHAAGMDLYACPDGEVVVKPGCRTIVPTGIALAIPVGYEGQVRPRSGLALHHGVTLVNTPGTIDADYRGELGIIIINHGDEDFVVSPGDRIAQLVIAPVHRAVLETVEELDETDRNEGGFGHTGF.

Substrate is bound by residues 67-69 (RSG), N80, and 84-86 (TID).

This sequence belongs to the dUTPase family. Requires Mg(2+) as cofactor.

The catalysed reaction is dUTP + H2O = dUMP + diphosphate + H(+). It functions in the pathway pyrimidine metabolism; dUMP biosynthesis; dUMP from dCTP (dUTP route): step 2/2. Its function is as follows. This enzyme is involved in nucleotide metabolism: it produces dUMP, the immediate precursor of thymidine nucleotides and it decreases the intracellular concentration of dUTP so that uracil cannot be incorporated into DNA. This is Deoxyuridine 5'-triphosphate nucleotidohydrolase from Syntrophotalea carbinolica (strain DSM 2380 / NBRC 103641 / GraBd1) (Pelobacter carbinolicus).